Consider the following 397-residue polypeptide: Probable peptidoglycan glycosyltransferase FtsW (397 aa).

Topologically, residues 1-26 (MSPRNSALERFRQHQKIPEKRWQRLA) are cytoplasmic. Residues 27–47 (FPDVGLLLCWLALIVIGMVMV) traverse the membrane as a helical segment. Over 48 to 69 (TSSSLSEAHVERLSTHHFAIRQ) the chain is Periplasmic. Residues 70-90 (GIFYVGSSIFAYIAFMLGTNF) traverse the membrane as a helical segment. Residues 91–96 (YREKAK) are Cytoplasmic-facing. The helical transmembrane segment at 97–117 (FILGLAFLGLLLVYAPGIGVV) threads the bilayer. Residues 118 to 126 (VNGSRRWLN) lie on the Periplasmic side of the membrane. A helical transmembrane segment spans residues 127–147 (LGVINLQVGEFAKLAVFIFTA). Topologically, residues 148 to 159 (AYLQHHTQRLDH) are cytoplasmic. The helical transmembrane segment at 160–180 (SWQPIIGLLAVTACFALMFYL) threads the bilayer. Over 181-185 (QPDFG) the chain is Periplasmic. A helical membrane pass occupies residues 186-206 (TMVVIVATVLGMLFLSGVSIW). Arginine 207 is a topological domain (cytoplasmic). Residues 208–228 (LLLLGVLIAPAMVWVLISESY) form a helical membrane-spanning segment. Topologically, residues 229–294 (RLRRLTTFIN…IFSIIAEETG (66 aa)) are periplasmic. A helical transmembrane segment spans residues 295 to 315 (LVGALIVMAILMILVWRAFAI). The Cytoplasmic segment spans residues 316–328 (GYLADRMRKRFSS). Residues 329 to 349 (LLAYGIGLWLGLQSLINIGVT) form a helical membrane-spanning segment. Residues 350–359 (TGALPTKGLT) lie on the Periplasmic side of the membrane. A helical membrane pass occupies residues 360–380 (LPLISYGGSSILMTSIALAIL). Topologically, residues 381-397 (ARIDAESRFIARLEGKI) are cytoplasmic.

This sequence belongs to the SEDS family. FtsW subfamily.

It localises to the cell inner membrane. It catalyses the reaction [GlcNAc-(1-&gt;4)-Mur2Ac(oyl-L-Ala-gamma-D-Glu-L-Lys-D-Ala-D-Ala)](n)-di-trans,octa-cis-undecaprenyl diphosphate + beta-D-GlcNAc-(1-&gt;4)-Mur2Ac(oyl-L-Ala-gamma-D-Glu-L-Lys-D-Ala-D-Ala)-di-trans,octa-cis-undecaprenyl diphosphate = [GlcNAc-(1-&gt;4)-Mur2Ac(oyl-L-Ala-gamma-D-Glu-L-Lys-D-Ala-D-Ala)](n+1)-di-trans,octa-cis-undecaprenyl diphosphate + di-trans,octa-cis-undecaprenyl diphosphate + H(+). It participates in cell wall biogenesis; peptidoglycan biosynthesis. Its function is as follows. Peptidoglycan polymerase that is essential for cell division. The chain is Probable peptidoglycan glycosyltransferase FtsW from Dichelobacter nodosus (strain VCS1703A).